A 90-amino-acid chain; its full sequence is DNA-binding protein HU-alpha (90 aa).

Belongs to the bacterial histone-like protein family. As to quaternary structure, heterodimer of an alpha and a beta chain.

Functionally, histone-like DNA-binding protein which is capable of wrapping DNA to stabilize it, and thus to prevent its denaturation under extreme environmental conditions. The chain is DNA-binding protein HU-alpha (hupA) from Pseudomonas aeruginosa (strain ATCC 15692 / DSM 22644 / CIP 104116 / JCM 14847 / LMG 12228 / 1C / PRS 101 / PAO1).